The following is a 416-amino-acid chain: Gamma-glutamyl phosphate reductase (416 aa).

It belongs to the gamma-glutamyl phosphate reductase family.

Its subcellular location is the cytoplasm. It catalyses the reaction L-glutamate 5-semialdehyde + phosphate + NADP(+) = L-glutamyl 5-phosphate + NADPH + H(+). It participates in amino-acid biosynthesis; L-proline biosynthesis; L-glutamate 5-semialdehyde from L-glutamate: step 2/2. Its function is as follows. Catalyzes the NADPH-dependent reduction of L-glutamate 5-phosphate into L-glutamate 5-semialdehyde and phosphate. The product spontaneously undergoes cyclization to form 1-pyrroline-5-carboxylate. This chain is Gamma-glutamyl phosphate reductase, found in Vibrio atlanticus (strain LGP32) (Vibrio splendidus (strain Mel32)).